Consider the following 865-residue polypeptide: Leucine--tRNA ligase (865 aa).

A 'HIGH' region motif is present at residues 36–46; that stretch reads PYPSGKIHMGH. The 'KMSKS' region signature appears at 608-612; it reads KMSKS. Lys611 is a binding site for ATP.

This sequence belongs to the class-I aminoacyl-tRNA synthetase family.

The protein localises to the cytoplasm. It carries out the reaction tRNA(Leu) + L-leucine + ATP = L-leucyl-tRNA(Leu) + AMP + diphosphate. The polypeptide is Leucine--tRNA ligase (Wolbachia sp. subsp. Brugia malayi (strain TRS)).